A 638-amino-acid polypeptide reads, in one-letter code: DNA mismatch repair protein MutL (638 aa).

Residues 404-433 (FGTQTNAFGSMATPRDNSRGNYSAGESRQR) form a disordered region.

This sequence belongs to the DNA mismatch repair MutL/HexB family.

Its function is as follows. This protein is involved in the repair of mismatches in DNA. It is required for dam-dependent methyl-directed DNA mismatch repair. May act as a 'molecular matchmaker', a protein that promotes the formation of a stable complex between two or more DNA-binding proteins in an ATP-dependent manner without itself being part of a final effector complex. In Shewanella baltica (strain OS195), this protein is DNA mismatch repair protein MutL.